The following is a 247-amino-acid chain: Anionic trypsin (247 aa).

The N-terminal stretch at 1–15 (MNPLLILAFLGAAVA) is a signal peptide. Residues 16–23 (TPTDDDDK) constitute a propeptide, activation peptide. The region spanning 24–244 (IVGGYTCEEN…FVDWIQSTIA (221 aa)) is the Peptidase S1 domain. 6 cysteine pairs are disulfide-bonded: Cys30-Cys160, Cys48-Cys64, Cys132-Cys233, Cys139-Cys206, Cys171-Cys185, and Cys196-Cys220. Catalysis depends on His63, which acts as the Charge relay system. Positions 75, 77, 80, and 85 each coordinate Ca(2+). Asp107 serves as the catalytic Charge relay system. The active-site Charge relay system is the Ser200.

This sequence belongs to the peptidase S1 family. Ca(2+) serves as cofactor.

It is found in the secreted. It localises to the extracellular space. The catalysed reaction is Preferential cleavage: Arg-|-Xaa, Lys-|-Xaa.. In Canis lupus familiaris (Dog), this protein is Anionic trypsin.